Reading from the N-terminus, the 197-residue chain is DnaJ homolog subfamily C member 5 (197 aa).

One can recognise a J domain in the interval 13–82 (GESLYHVLGL…RNIYDKYGSL (70 aa)). Positions 153-197 (EDLEAQMQSDERDTEGPVLVQPASATETTQLTSDSHASYHTDGFN) are disordered. The segment covering 175–197 (ASATETTQLTSDSHASYHTDGFN) has biased composition (polar residues).

Post-translationally, palmitoylated. Palmitoylation occurs probably in the cysteine-rich domain and regulates DNAJC5 stable membrane attachment.

The protein resides in the cytoplasm. It is found in the cytosol. It localises to the membrane. The protein localises to the cytoplasmic vesicle. Its subcellular location is the secretory vesicle. The protein resides in the chromaffin granule membrane. It is found in the melanosome. It localises to the cell membrane. May have an important role in presynaptic function. May be involved in calcium-dependent neurotransmitter release at nerve endings. The protein is DnaJ homolog subfamily C member 5 of Xenopus laevis (African clawed frog).